The primary structure comprises 101 residues: Small ribosomal subunit protein uS14 (101 aa).

Residues 1–20 (MAKTSAVNRNKMRERMASRD) form a disordered region. Over residues 11 to 20 (KMRERMASRD) the composition is skewed to basic and acidic residues.

Belongs to the universal ribosomal protein uS14 family. In terms of assembly, part of the 30S ribosomal subunit. Contacts proteins S3 and S10.

Functionally, binds 16S rRNA, required for the assembly of 30S particles and may also be responsible for determining the conformation of the 16S rRNA at the A site. This Granulibacter bethesdensis (strain ATCC BAA-1260 / CGDNIH1) protein is Small ribosomal subunit protein uS14.